We begin with the raw amino-acid sequence, 146 residues long: 3-hydroxyacyl-[acyl-carrier-protein] dehydratase FabZ (146 aa).

His-48 is an active-site residue.

This sequence belongs to the thioester dehydratase family. FabZ subfamily.

It is found in the cytoplasm. The enzyme catalyses a (3R)-hydroxyacyl-[ACP] = a (2E)-enoyl-[ACP] + H2O. Its function is as follows. Involved in unsaturated fatty acids biosynthesis. Catalyzes the dehydration of short chain beta-hydroxyacyl-ACPs and long chain saturated and unsaturated beta-hydroxyacyl-ACPs. The chain is 3-hydroxyacyl-[acyl-carrier-protein] dehydratase FabZ from Campylobacter lari (strain RM2100 / D67 / ATCC BAA-1060).